The sequence spans 164 residues: Protein phosphatase 1 regulatory subunit 14C (164 aa).

Residues 1–19 (MSVVTGGGEAAGGGGGGGA) are compositionally biased toward gly residues. A disordered region spans residues 1–70 (MSVVTGGGEA…QQQRRHQQGK (70 aa)). N-acetylserine is present on Ser-2. Ser-25 is modified (phosphoserine). Arg-27 carries the omega-N-methylarginine modification. Ser-33 carries the phosphoserine modification. Residues 50-62 (VTTVAAAGQVQQQ) are compositionally biased toward low complexity. Phosphothreonine; by ILK1 is present on Thr-72.

The protein belongs to the PP1 inhibitor family. In terms of processing, the main inhibitory site appears to be Thr-72. Has over 600-fold higher inhibitory activity when phosphorylated, creating a molecular switch for regulating the phosphorylation status of PPP1CA substrates and smooth muscle contraction. Detected in heart, muscle, spinal cord, hippocampus, hypothalamus, thalamus, midbrain, brain stem, cerebellum, brain cortex and olfactory bulb.

It localises to the endomembrane system. Its function is as follows. Inhibitor of the PP1 regulatory subunit PPP1CA. This is Protein phosphatase 1 regulatory subunit 14C (Ppp1r14c) from Mus musculus (Mouse).